Here is a 195-residue protein sequence, read N- to C-terminus: Imidazoleglycerol-phosphate dehydratase (195 aa).

This sequence belongs to the imidazoleglycerol-phosphate dehydratase family.

It localises to the cytoplasm. It carries out the reaction D-erythro-1-(imidazol-4-yl)glycerol 3-phosphate = 3-(imidazol-4-yl)-2-oxopropyl phosphate + H2O. Its pathway is amino-acid biosynthesis; L-histidine biosynthesis; L-histidine from 5-phospho-alpha-D-ribose 1-diphosphate: step 6/9. The protein is Imidazoleglycerol-phosphate dehydratase of Dinoroseobacter shibae (strain DSM 16493 / NCIMB 14021 / DFL 12).